Here is a 619-residue protein sequence, read N- to C-terminus: Enolase 4 (619 aa).

Over residues 173-184 (DKERKELEKSQE) the composition is skewed to basic and acidic residues. Positions 173–236 (DKERKELEKS…PPEPPEPVLH (64 aa)) are disordered. Pro residues predominate over residues 188 to 206 (PAPPPVTLPPPPPPPPPPP). E302 provides a ligand contact to substrate. Residues 333–354 (TLPPPKQETKKGHNGSKRAQPP) are disordered. K497 serves as the catalytic Proton acceptor. K548 is a substrate binding site.

It belongs to the enolase family. In terms of assembly, interacts with ENO1. Isoform 1 and isoform 4 interact with AKAP4. Synthesized as an approximately 70-kDa precursor, which then undergoes proteolytic cleavage to an approximately 60-kDa enzyme; HOATZ associates directly or indirectly with ENO4 to mediate this process before its transport to mature flagella. Testis-specific. Expressed in spermatids and ependyma (at protein level). As to expression, expressed at higher levels in late spermatids than in pachytene spermatocytes. In terms of tissue distribution, expressed at higher levels in pachytene spermatocytes than in late spermatids.

It carries out the reaction (2R)-2-phosphoglycerate = phosphoenolpyruvate + H2O. It participates in carbohydrate degradation; glycolysis; pyruvate from D-glyceraldehyde 3-phosphate: step 4/5. Functionally, required for sperm motility, function and male fertility. May be involved in the normal assembly of the sperm fibrous sheath and provides most of the enolase activity in sperm. In Mus musculus (Mouse), this protein is Enolase 4 (Eno4).